The sequence spans 82 residues: UPF0298 protein SMU_1670c (82 aa).

This sequence belongs to the UPF0298 family.

The protein resides in the cytoplasm. The protein is UPF0298 protein SMU_1670c of Streptococcus mutans serotype c (strain ATCC 700610 / UA159).